A 176-amino-acid chain; its full sequence is RNA pyrophosphohydrolase (176 aa).

The region spanning 6–149 (GYRPNVGIIL…KRQVYQQALF (144 aa)) is the Nudix hydrolase domain. The Nudix box signature appears at 38–59 (GGIKHGESPEQAMFRELFEEVG).

Belongs to the Nudix hydrolase family. RppH subfamily. It depends on a divalent metal cation as a cofactor.

In terms of biological role, accelerates the degradation of transcripts by removing pyrophosphate from the 5'-end of triphosphorylated RNA, leading to a more labile monophosphorylated state that can stimulate subsequent ribonuclease cleavage. The protein is RNA pyrophosphohydrolase of Aromatoleum aromaticum (strain DSM 19018 / LMG 30748 / EbN1) (Azoarcus sp. (strain EbN1)).